The primary structure comprises 36 residues: Photosystem I reaction center subunit VIII (36 aa).

A helical transmembrane segment spans residues 6–26 (LPSIFVPLVGLVFPAIAMASL).

It belongs to the PsaI family.

It localises to the plastid. The protein resides in the chloroplast thylakoid membrane. Functionally, may help in the organization of the PsaL subunit. This Drimys granadensis protein is Photosystem I reaction center subunit VIII.